The following is a 1615-amino-acid chain: Mediator of RNA polymerase II transcription subunit 23 (1615 aa).

2 disordered regions span residues 40–67 (RQKP…DLPP) and 1230–1270 (SSSS…NASE). Residues 41–51 (QKPDESLRDPP) are compositionally biased toward basic and acidic residues. A compositionally biased stretch (low complexity) spans 1230–1241 (SSSSNCSSRSGS).

The protein belongs to the Mediator complex subunit 23 family. As to quaternary structure, component of the Mediator complex.

The protein resides in the nucleus. Its function is as follows. Component of the Mediator complex, a coactivator involved in the regulated transcription of nearly all RNA polymerase II-dependent genes. Mediator functions as a bridge to convey information from gene-specific regulatory proteins to the basal RNA polymerase II transcription machinery. The Mediator complex, having a compact conformation in its free form, is recruited to promoters by direct interactions with regulatory proteins and serves for the assembly of a functional preinitiation complex with RNA polymerase II and the general transcription factors. The chain is Mediator of RNA polymerase II transcription subunit 23 (MED23) from Arabidopsis thaliana (Mouse-ear cress).